Consider the following 240-residue polypeptide: 2-C-methyl-D-erythritol 4-phosphate cytidylyltransferase (240 aa).

It belongs to the IspD/TarI cytidylyltransferase family. IspD subfamily.

It catalyses the reaction 2-C-methyl-D-erythritol 4-phosphate + CTP + H(+) = 4-CDP-2-C-methyl-D-erythritol + diphosphate. It functions in the pathway isoprenoid biosynthesis; isopentenyl diphosphate biosynthesis via DXP pathway; isopentenyl diphosphate from 1-deoxy-D-xylulose 5-phosphate: step 2/6. Catalyzes the formation of 4-diphosphocytidyl-2-C-methyl-D-erythritol from CTP and 2-C-methyl-D-erythritol 4-phosphate (MEP). The chain is 2-C-methyl-D-erythritol 4-phosphate cytidylyltransferase from Chlorobium luteolum (strain DSM 273 / BCRC 81028 / 2530) (Pelodictyon luteolum).